The sequence spans 426 residues: tRNA(Ile)-lysidine synthase (426 aa).

27 to 32 (SGGADS) is an ATP binding site.

Belongs to the tRNA(Ile)-lysidine synthase family.

Its subcellular location is the cytoplasm. The enzyme catalyses cytidine(34) in tRNA(Ile2) + L-lysine + ATP = lysidine(34) in tRNA(Ile2) + AMP + diphosphate + H(+). Its function is as follows. Ligates lysine onto the cytidine present at position 34 of the AUA codon-specific tRNA(Ile) that contains the anticodon CAU, in an ATP-dependent manner. Cytidine is converted to lysidine, thus changing the amino acid specificity of the tRNA from methionine to isoleucine. In Bacteroides thetaiotaomicron (strain ATCC 29148 / DSM 2079 / JCM 5827 / CCUG 10774 / NCTC 10582 / VPI-5482 / E50), this protein is tRNA(Ile)-lysidine synthase.